The following is a 189-amino-acid chain: Peptidyl-tRNA hydrolase (189 aa).

Tyr15 is a binding site for tRNA. Catalysis depends on His20, which acts as the Proton acceptor. 2 residues coordinate tRNA: Phe64 and Asn66.

Belongs to the PTH family. As to quaternary structure, monomer.

The protein resides in the cytoplasm. It catalyses the reaction an N-acyl-L-alpha-aminoacyl-tRNA + H2O = an N-acyl-L-amino acid + a tRNA + H(+). Its function is as follows. Hydrolyzes ribosome-free peptidyl-tRNAs (with 1 or more amino acids incorporated), which drop off the ribosome during protein synthesis, or as a result of ribosome stalling. Catalyzes the release of premature peptidyl moieties from peptidyl-tRNA molecules trapped in stalled 50S ribosomal subunits, and thus maintains levels of free tRNAs and 50S ribosomes. The polypeptide is Peptidyl-tRNA hydrolase (Persephonella marina (strain DSM 14350 / EX-H1)).